The primary structure comprises 617 residues: Protein AsmA (617 aa).

Residues 1 to 3 (MRR) lie on the Cytoplasmic side of the membrane. A helical membrane pass occupies residues 4–24 (FLTTLMILLVVLVAGLSALVL). The Periplasmic segment spans residues 25-617 (LVNPNDFRDY…KDVKKLLEKM (593 aa)). Positions 302-319 (TANGENGAAQQGQSQSTL) are enriched in polar residues. Positions 302–321 (TANGENGAAQQGQSQSTLPR) are disordered.

The protein belongs to the AsmA family.

The protein resides in the cell inner membrane. In terms of biological role, could be involved in the assembly of outer membrane proteins. May indirectly influence the assembly of outer membrane proteins, potentially by altering outer membrane fluidity. Inhibits the assembly of mutant forms of outer membrane protein F (OmpF). In Escherichia coli (strain K12), this protein is Protein AsmA.